The chain runs to 188 residues: Putative manganese efflux pump MntP (188 aa).

The next 6 helical transmembrane spans lie at 3–23 (ISATILLAFGMSMDAFAASIG), 41–61 (LIFGAIETLTPLIGWSLGMLA), 62–82 (SQFILEWNHWIAFTLLVFLGG), 106–128 (WILVTTAIATSLDAMAVGVGLAF), 143–163 (ATLIMSTIGMMVGRFIGPLLG), and 168–188 (ILGGIVLIGIGGQILWSHFAG).

It belongs to the MntP (TC 9.B.29) family.

The protein resides in the cell inner membrane. Probably functions as a manganese efflux pump. In Enterobacter sp. (strain 638), this protein is Putative manganese efflux pump MntP.